Consider the following 81-residue polypeptide: MNNKSTNNLQDIFLNSARKNKIPVAIHLTNGFQMRGSVKGFDSFTVILESDGKQMMIYKHAVSTITPLRPILFNQPQQDEE.

Positions 11 to 71 constitute a Sm domain; the sequence is DIFLNSARKN…VSTITPLRPI (61 aa).

Belongs to the Hfq family. As to quaternary structure, homohexamer.

Functionally, RNA chaperone that binds small regulatory RNA (sRNAs) and mRNAs to facilitate mRNA translational regulation in response to envelope stress, environmental stress and changes in metabolite concentrations. Also binds with high specificity to tRNAs. The protein is RNA-binding protein Hfq of Clostridium acetobutylicum (strain ATCC 824 / DSM 792 / JCM 1419 / IAM 19013 / LMG 5710 / NBRC 13948 / NRRL B-527 / VKM B-1787 / 2291 / W).